The following is a 423-amino-acid chain: Transcription factor IIIB 50 kDa subunit (423 aa).

A TFIIB-type zinc finger spans residues 1–34; that stretch reads MSKNCPECGSSRVVEDDLYSQKQWVCEDCGSVVS. Zn(2+) is bound by residues Cys-5, Cys-8, Cys-26, and Cys-29. Repeat 2 spans residues 171–245; sequence LESFCYDFKL…LARMKYSLMK (75 aa). The segment covering 325–340 has biased composition (low complexity); it reads QTSQYSESELSDSKSS. The interval 325 to 358 is disordered; that stretch reads QTSQYSESELSDSKSSVQTQCKSPPDEEDEGCEL. Cys-373 bears the Cysteine sulfenic acid (-SOH) mark.

This sequence belongs to the TFIIB family. In terms of assembly, component of TFIIIB complexes. Interacts with TBP and forms a ternary complex with TBp and target DNA sequences. Post-translationally, in response to oxidative stress, a Cys-residue is reversibly oxidized to cysteine sulfenic acid. This impairs formation of a ternary complex with TBP and DNA and down-regulates expression of target genes in response to oxidative stress.

The protein resides in the nucleus. In terms of biological role, general activator of RNA polymerase III transcription. Factor exclusively required for RNA polymerase III transcription of genes with promoter elements upstream of the initiation sites. Contributes to the regulation of gene expression; functions as activator in the absence of oxidative stress. Down-regulates expression of target genes in response to oxidative stress. Overexpression protects cells against apoptosis in response to oxidative stress. The sequence is that of Transcription factor IIIB 50 kDa subunit (brf2) from Danio rerio (Zebrafish).